The following is a 73-amino-acid chain: Putative antitoxin M1627_0365 (73 aa).

The protein belongs to the UPF0330 family.

Possibly the antitoxin component of a type II toxin-antitoxin (TA) system. This Saccharolobus islandicus (strain M.16.27) (Sulfolobus islandicus) protein is Putative antitoxin M1627_0365.